We begin with the raw amino-acid sequence, 295 residues long: Acetylglutamate kinase (295 aa).

Substrate is bound by residues 66–67 (GG), Arg88, and Asn193.

Belongs to the acetylglutamate kinase family. ArgB subfamily.

It is found in the cytoplasm. The enzyme catalyses N-acetyl-L-glutamate + ATP = N-acetyl-L-glutamyl 5-phosphate + ADP. The protein operates within amino-acid biosynthesis; L-arginine biosynthesis; N(2)-acetyl-L-ornithine from L-glutamate: step 2/4. In terms of biological role, catalyzes the ATP-dependent phosphorylation of N-acetyl-L-glutamate. The protein is Acetylglutamate kinase of Rhizobium johnstonii (strain DSM 114642 / LMG 32736 / 3841) (Rhizobium leguminosarum bv. viciae).